Consider the following 500-residue polypeptide: Lysine--tRNA ligase (500 aa).

Residues Glu-407 and Glu-414 each coordinate Mg(2+).

The protein belongs to the class-II aminoacyl-tRNA synthetase family. As to quaternary structure, homodimer. Mg(2+) is required as a cofactor.

It is found in the cytoplasm. The catalysed reaction is tRNA(Lys) + L-lysine + ATP = L-lysyl-tRNA(Lys) + AMP + diphosphate. This is Lysine--tRNA ligase from Azobacteroides pseudotrichonymphae genomovar. CFP2.